We begin with the raw amino-acid sequence, 251 residues long: Triosephosphate isomerase, glycosomal (251 aa).

Substrate is bound by residues N12 and K14. The active-site Electrophile is the H96. The Proton acceptor role is filled by E168.

It belongs to the triosephosphate isomerase family. Homodimer.

The protein localises to the glycosome. The enzyme catalyses D-glyceraldehyde 3-phosphate = dihydroxyacetone phosphate. It functions in the pathway carbohydrate biosynthesis; gluconeogenesis. Its pathway is carbohydrate degradation; glycolysis; D-glyceraldehyde 3-phosphate from glycerone phosphate: step 1/1. In Trypanosoma cruzi, this protein is Triosephosphate isomerase, glycosomal.